The sequence spans 490 residues: uncharacterized protein (490 aa).

Low complexity predominate over residues 370–385 (FSMKRPSSSSSSLSGS). Residues 370–406 (FSMKRPSSSSSSLSGSWHGDTENSVKQSLASPSEASL) form a disordered region. The segment covering 391–406 (ENSVKQSLASPSEASL) has biased composition (polar residues).

It localises to the cytoplasm. The protein localises to the nucleus. This is an uncharacterized protein from Schizosaccharomyces pombe (strain 972 / ATCC 24843) (Fission yeast).